Here is a 199-residue protein sequence, read N- to C-terminus: FMN-dependent NADH:quinone oxidoreductase (199 aa).

Serine 10 is an FMN binding site.

Belongs to the azoreductase type 1 family. Homodimer. It depends on FMN as a cofactor.

It catalyses the reaction 2 a quinone + NADH + H(+) = 2 a 1,4-benzosemiquinone + NAD(+). It carries out the reaction N,N-dimethyl-1,4-phenylenediamine + anthranilate + 2 NAD(+) = 2-(4-dimethylaminophenyl)diazenylbenzoate + 2 NADH + 2 H(+). Quinone reductase that provides resistance to thiol-specific stress caused by electrophilic quinones. Its function is as follows. Also exhibits azoreductase activity. Catalyzes the reductive cleavage of the azo bond in aromatic azo compounds to the corresponding amines. This Cellvibrio japonicus (strain Ueda107) (Pseudomonas fluorescens subsp. cellulosa) protein is FMN-dependent NADH:quinone oxidoreductase.